Reading from the N-terminus, the 463-residue chain is Tryptophan aminotransferase-related protein 4 (463 aa).

A helical transmembrane segment spans residues 6 to 26 (LLLIVSIILNLVFTIHILYYS). Pyridoxal 5'-phosphate contacts are provided by residues tyrosine 124, 163-164 (TT), asparagine 239, 259-262 (DYAY), 282-285 (SLSK), and arginine 293. Position 285 is an N6-(pyridoxal phosphate)lysine (lysine 285).

Belongs to the alliinase family. Pyridoxal 5'-phosphate serves as cofactor.

It is found in the membrane. In terms of biological role, probable aminotransferase. This chain is Tryptophan aminotransferase-related protein 4 (TAR4), found in Arabidopsis thaliana (Mouse-ear cress).